The following is a 262-amino-acid chain: Small ribosomal subunit protein uS2 (262 aa).

It belongs to the universal ribosomal protein uS2 family.

This is Small ribosomal subunit protein uS2 from Borrelia garinii subsp. bavariensis (strain ATCC BAA-2496 / DSM 23469 / PBi) (Borreliella bavariensis).